Here is a 480-residue protein sequence, read N- to C-terminus: Glutamate--tRNA ligase (480 aa).

Residues 21 to 31 (PSPTGYLHVGG) carry the 'HIGH' region motif. Residues Cys110, Cys112, Cys137, and His139 each contribute to the Zn(2+) site. The 'KMSKS' region signature appears at 248-252 (KLSKR). Lys251 provides a ligand contact to ATP.

It belongs to the class-I aminoacyl-tRNA synthetase family. Glutamate--tRNA ligase type 1 subfamily. Monomer. Requires Zn(2+) as cofactor.

The protein localises to the cytoplasm. It carries out the reaction tRNA(Glu) + L-glutamate + ATP = L-glutamyl-tRNA(Glu) + AMP + diphosphate. In terms of biological role, catalyzes the attachment of glutamate to tRNA(Glu) in a two-step reaction: glutamate is first activated by ATP to form Glu-AMP and then transferred to the acceptor end of tRNA(Glu). The chain is Glutamate--tRNA ligase from Histophilus somni (strain 2336) (Haemophilus somnus).